The chain runs to 42 residues: Photosystem II reaction center protein J (42 aa).

The chain crosses the membrane as a helical span at residues 10–30; it reads IPLWLIATVAGILVLTVVGIF.

It belongs to the PsbJ family. In terms of assembly, PSII is composed of 1 copy each of membrane proteins PsbA, PsbB, PsbC, PsbD, PsbE, PsbF, PsbH, PsbI, PsbJ, PsbK, PsbL, PsbM, PsbT, PsbX, PsbY, PsbZ, Psb30/Ycf12, at least 3 peripheral proteins of the oxygen-evolving complex and a large number of cofactors. It forms dimeric complexes.

The protein localises to the plastid. Its subcellular location is the chloroplast thylakoid membrane. Functionally, one of the components of the core complex of photosystem II (PSII). PSII is a light-driven water:plastoquinone oxidoreductase that uses light energy to abstract electrons from H(2)O, generating O(2) and a proton gradient subsequently used for ATP formation. It consists of a core antenna complex that captures photons, and an electron transfer chain that converts photonic excitation into a charge separation. The sequence is that of Photosystem II reaction center protein J from Chara vulgaris (Common stonewort).